A 378-amino-acid polypeptide reads, in one-letter code: Queuine tRNA-ribosyltransferase (378 aa).

Aspartate 91 (proton acceptor) is an active-site residue. Substrate contacts are provided by residues 91-95, aspartate 145, glutamine 189, and glycine 216; that span reads DSGGF. The segment at 247 to 253 is RNA binding; the sequence is GVGKPED. The active-site Nucleophile is aspartate 266. Residues 271-275 form an RNA binding; important for wobble base 34 recognition region; that stretch reads TRNAR. Zn(2+)-binding residues include cysteine 304, cysteine 306, cysteine 309, and histidine 335.

It belongs to the queuine tRNA-ribosyltransferase family. Homodimer. Within each dimer, one monomer is responsible for RNA recognition and catalysis, while the other monomer binds to the replacement base PreQ1. Zn(2+) serves as cofactor.

It catalyses the reaction 7-aminomethyl-7-carbaguanine + guanosine(34) in tRNA = 7-aminomethyl-7-carbaguanosine(34) in tRNA + guanine. It functions in the pathway tRNA modification; tRNA-queuosine biosynthesis. Its function is as follows. Catalyzes the base-exchange of a guanine (G) residue with the queuine precursor 7-aminomethyl-7-deazaguanine (PreQ1) at position 34 (anticodon wobble position) in tRNAs with GU(N) anticodons (tRNA-Asp, -Asn, -His and -Tyr). Catalysis occurs through a double-displacement mechanism. The nucleophile active site attacks the C1' of nucleotide 34 to detach the guanine base from the RNA, forming a covalent enzyme-RNA intermediate. The proton acceptor active site deprotonates the incoming PreQ1, allowing a nucleophilic attack on the C1' of the ribose to form the product. After dissociation, two additional enzymatic reactions on the tRNA convert PreQ1 to queuine (Q), resulting in the hypermodified nucleoside queuosine (7-(((4,5-cis-dihydroxy-2-cyclopenten-1-yl)amino)methyl)-7-deazaguanosine). In Vibrio atlanticus (strain LGP32) (Vibrio splendidus (strain Mel32)), this protein is Queuine tRNA-ribosyltransferase.